The sequence spans 471 residues: MQKSTNSDIPVETLNPTRQGTGAVQMRIKNANSHHDRLSQSKSMILTEVGKVTEPISRHRRNHSQHILKDVIPPLEQLMVEKEGYLQKAKIADGGKKLRKNWTTSWIVLSSRKIEFYKESKQQALSNMKTGNKPESVDLCGAHIEWAKEKSSRKNVFQITTLSGNEFLLQSDIDFIILDWFHAIKNAIDRLPKDPSSHSRNLELFKIQRSSSTELLSHYDSDTKEQKPEHRKSLMFRLHHSASDTSDKNRVKSRLKKFITRRPSLKTLQEKGLIKDQIFGSHLHTLCEREKSTVPRFVKQCIEAVEKRGLDVDGIYRVSGNLATIQKLRFIVNQEEKLNLDDSQWEDIHVVTGALKMFFRDLPEPLFPYSFFEQFVEAIKKQDNNTRIEAIKSLVQKLPPPNRDTMKVLFGHLTKIVARASKNLMSTHSLGIVFGPTLLRAEDESGNMAVHMVYQNQIAELMLSAYDQIFS.

The segment at Met-1–Gly-20 is disordered. Ser-43 carries the post-translational modification Phosphoserine. Positions Met-79 to Asp-189 constitute a PH domain. 3 positions are modified to phosphoserine: Ser-196, Ser-199, and Ser-243. One can recognise a Rho-GAP domain in the interval Ser-281–Phe-470.

Its subcellular location is the cytoplasm. The protein resides in the membrane. Functionally, GTPase activator for the Rho-type GTPases by converting them to an inactive GDP-bound state. Has activity toward RAC1. Overexpression results in an increase in actin stress fibers and cell contraction. The sequence is that of Rho GTPase-activating protein 15 (ARHGAP15) from Bos taurus (Bovine).